A 318-amino-acid chain; its full sequence is Ubiquitin-like domain-containing CTD phosphatase 1 (318 aa).

The 79-residue stretch at 3–81 (LPIIVKWGGQ…IMMMGTREES (79 aa)) folds into the Ubiquitin-like domain. Lys-117 carries the post-translational modification N6-acetyllysine. Residues 133-294 (PREGKKLLVL…VKLTQYLKEI (162 aa)) enclose the FCP1 homology domain. 3 residues coordinate Mg(2+): Asp-143, Asp-145, and Asp-253.

Requires Mg(2+) as cofactor.

The protein localises to the nucleus. The enzyme catalyses O-phospho-L-seryl-[protein] + H2O = L-seryl-[protein] + phosphate. The catalysed reaction is O-phospho-L-threonyl-[protein] + H2O = L-threonyl-[protein] + phosphate. In terms of biological role, dephosphorylates 26S nuclear proteasomes, thereby decreasing their proteolytic activity. Recruited to the 19S regulatory particle of the 26S proteasome through its interaction with 19S component PSMD2/RPN1. Once recruited, dephosphorylates 19S component PSMC2/RPT1 which impairs PSMC2 ATPase activity and disrupts 26S proteasome assembly. Has also been reported to stimulate the proteolytic activity of the 26S proteasome. The protein is Ubiquitin-like domain-containing CTD phosphatase 1 (Ublcp1) of Rattus norvegicus (Rat).